The sequence spans 227 residues: Isoprenyl transferase (227 aa).

The active site involves Asp-13. Asp-13 serves as a coordination point for Mg(2+). Substrate is bound by residues 14-17 (GNGR), Trp-18, Arg-26, His-30, and 58-60 (STE). Asn-61 serves as the catalytic Proton acceptor. Residues Trp-62, Arg-64, Arg-175, and 181–183 (RLS) contribute to the substrate site. Glu-194 is a Mg(2+) binding site.

This sequence belongs to the UPP synthase family. As to quaternary structure, homodimer. Mg(2+) serves as cofactor.

In terms of biological role, catalyzes the condensation of isopentenyl diphosphate (IPP) with allylic pyrophosphates generating different type of terpenoids. In Treponema denticola (strain ATCC 35405 / DSM 14222 / CIP 103919 / JCM 8153 / KCTC 15104), this protein is Isoprenyl transferase.